The following is a 265-amino-acid chain: U6 snRNA phosphodiesterase 1 (265 aa).

The interval 1-22 (MSLVCYESSSSGEDDDETISDN) is disordered. The active-site Proton acceptor is His109. AMP is bound by residues 109–111 (HLS) and 195–201 (DFLLHIS). Residue 197–201 (LLHIS) coordinates UMP. Catalysis depends on His199, which acts as the Proton donor.

It belongs to the 2H phosphoesterase superfamily. USB1 family.

It is found in the nucleus. It catalyses the reaction a 3'-end uridylyl-uridine-RNA = a 3'-end 2',3'-cyclophospho-uridine-RNA + uridine. 3'-5' RNA exonuclease that trims the 3' end of oligo(U) tracts of the pre-U6 small nuclear RNA (snRNA) molecule, leading to the formation of a U6 snRNA 3' end-terminated with a 2',3'-cyclic phosphate.d. Participates in the U6 snRNA 3' end processing that prevents U6 snRNA degradation. The protein is U6 snRNA phosphodiesterase 1 of Schizosaccharomyces pombe (strain 972 / ATCC 24843) (Fission yeast).